A 390-amino-acid polypeptide reads, in one-letter code: 8-amino-7-oxononanoate synthase (390 aa).

R20 contributes to the substrate binding site. 107-108 (GF) serves as a coordination point for pyridoxal 5'-phosphate. H132 contacts substrate. Pyridoxal 5'-phosphate-binding positions include S179, 204-207 (DDAH), and 235-238 (TLSK). At K238 the chain carries N6-(pyridoxal phosphate)lysine. T352 lines the substrate pocket.

The protein belongs to the class-II pyridoxal-phosphate-dependent aminotransferase family. BioF subfamily. As to quaternary structure, homodimer. It depends on pyridoxal 5'-phosphate as a cofactor.

It catalyses the reaction 6-carboxyhexanoyl-[ACP] + L-alanine + H(+) = (8S)-8-amino-7-oxononanoate + holo-[ACP] + CO2. Its pathway is cofactor biosynthesis; biotin biosynthesis. Its function is as follows. Catalyzes the decarboxylative condensation of pimeloyl-[acyl-carrier protein] and L-alanine to produce 8-amino-7-oxononanoate (AON), [acyl-carrier protein], and carbon dioxide. This chain is 8-amino-7-oxononanoate synthase, found in Exiguobacterium sibiricum (strain DSM 17290 / CCUG 55495 / CIP 109462 / JCM 13490 / 255-15).